A 189-amino-acid chain; its full sequence is Peptidyl-tRNA hydrolase (189 aa).

Position 14 (Tyr-14) interacts with tRNA. Catalysis depends on His-19, which acts as the Proton acceptor. 3 residues coordinate tRNA: Tyr-64, Asn-66, and Asn-112.

This sequence belongs to the PTH family. As to quaternary structure, monomer.

It is found in the cytoplasm. The catalysed reaction is an N-acyl-L-alpha-aminoacyl-tRNA + H2O = an N-acyl-L-amino acid + a tRNA + H(+). Its function is as follows. Hydrolyzes ribosome-free peptidyl-tRNAs (with 1 or more amino acids incorporated), which drop off the ribosome during protein synthesis, or as a result of ribosome stalling. In terms of biological role, catalyzes the release of premature peptidyl moieties from peptidyl-tRNA molecules trapped in stalled 50S ribosomal subunits, and thus maintains levels of free tRNAs and 50S ribosomes. This is Peptidyl-tRNA hydrolase from Clostridium botulinum (strain 657 / Type Ba4).